Consider the following 507-residue polypeptide: Probable aldehyde dehydrogenase (507 aa).

219 to 225 serves as a coordination point for NAD(+); it reads GFGAEAG. Active-site residues include glutamate 263 and cysteine 302.

It belongs to the aldehyde dehydrogenase family.

It carries out the reaction an aldehyde + NAD(+) + H2O = a carboxylate + NADH + 2 H(+). The sequence is that of Probable aldehyde dehydrogenase from Mycobacterium bovis (strain ATCC BAA-935 / AF2122/97).